The chain runs to 158 residues: Transcription elongation factor GreA (158 aa).

The stretch at 1-26 (MNKVPLTEKGAQQLREELQELKTVVR) forms a coiled coil.

The protein belongs to the GreA/GreB family.

Functionally, necessary for efficient RNA polymerase transcription elongation past template-encoded arresting sites. The arresting sites in DNA have the property of trapping a certain fraction of elongating RNA polymerases that pass through, resulting in locked ternary complexes. Cleavage of the nascent transcript by cleavage factors such as GreA or GreB allows the resumption of elongation from the new 3'terminus. GreA releases sequences of 2 to 3 nucleotides. The sequence is that of Transcription elongation factor GreA from Nitrosococcus oceani (strain ATCC 19707 / BCRC 17464 / JCM 30415 / NCIMB 11848 / C-107).